The sequence spans 96 residues: Transcription and mRNA export factor ENY2 (96 aa).

The protein belongs to the ENY2 family. Component of the nuclear pore complex (NPC)-associated TREX-2 complex (transcription and export complex 2). Component of the SAGA transcription coactivator-HAT complex. Within the SAGA complex, participates in a subcomplex of SAGA called the DUB module (deubiquitination module).

It localises to the nucleus. It is found in the nucleoplasm. Its function is as follows. Involved in mRNA export coupled transcription activation by association with both the TREX-2 and the SAGA complexes. The transcription regulatory histone acetylation (HAT) complex SAGA is a multiprotein complex that activates transcription by remodeling chromatin and mediating histone acetylation and deubiquitination. Within the SAGA complex, participates in a subcomplex that specifically deubiquitinates histones. The SAGA complex is recruited to specific gene promoters by activators, where it is required for transcription. The TREX-2 complex functions in docking export-competent ribonucleoprotein particles (mRNPs) to the nuclear entrance of the nuclear pore complex (nuclear basket). TREX-2 participates in mRNA export and accurate chromatin positioning in the nucleus by tethering genes to the nuclear periphery. This Taeniopygia guttata (Zebra finch) protein is Transcription and mRNA export factor ENY2.